A 163-amino-acid chain; its full sequence is General stress protein 16O (163 aa).

The span at 19–30 (QKELSGEKKETE) shows a compositional bias: basic and acidic residues. Disordered regions lie at residues 19–55 (QKEL…TLVT) and 115–163 (ADVE…QDSK). The segment at 89–123 (CEKTGQEIPYERLEAVPYARMTVEAQADVEDDLET) adopts a dksA C4-type; degenerate zinc-finger fold. Positions 127–146 (SYEREFHEQVKDLSNKETID) are enriched in basic and acidic residues.

The polypeptide is General stress protein 16O (yocK) (Bacillus subtilis (strain 168)).